Here is a 366-residue protein sequence, read N- to C-terminus: MIRTEEMLLNVGPQHPSTHGVFRLVIKIDGEIIKEATPVIGYLHRGTEKIAESLQYTQIIPYTDRMDYLSAMTNNYVICHAVETMMGLEIPERAEYLRVLAMELGRIASHLVWWGTNLLDIGAVSPFLYAFREREMIINLLNELCGARLTFNYMRVGGVKWDAPDGWIEKVEEFVPYMREQLAGYHDLVSGNEIFLNRVKGVGIYSEEDAISYSLSGANLRCTGVNWDLRKDEPYSIYDRFDFHIPVGSVGDAWDRYVCRMQEIEESLKIVEQAVQQFPKEGAVLAKVPKIIKAPKGEAFVRIESPRGEIGCYIASDGKKEPYRLKFRRPSFYNLQILPKLLKGENIANLITILGGVDIVLGEVDG.

The protein belongs to the complex I 49 kDa subunit family. As to quaternary structure, NDH-1 is composed of 14 different subunits. Subunits NuoB, C, D, E, F, and G constitute the peripheral sector of the complex.

It is found in the cell membrane. It carries out the reaction a quinone + NADH + 5 H(+)(in) = a quinol + NAD(+) + 4 H(+)(out). NDH-1 shuttles electrons from NADH, via FMN and iron-sulfur (Fe-S) centers, to quinones in the respiratory chain. The immediate electron acceptor for the enzyme in this species is believed to be a menaquinone. Couples the redox reaction to proton translocation (for every two electrons transferred, four hydrogen ions are translocated across the cytoplasmic membrane), and thus conserves the redox energy in a proton gradient. The protein is NADH-quinone oxidoreductase subunit D of Bacillus cereus (strain ZK / E33L).